Here is a 143-residue protein sequence, read N- to C-terminus: Phospholipase A2 isozymes PA3A/PA3B/PA5 (143 aa).

3 residues coordinate Ca(2+): tryptophan 10, glycine 12, and glycine 14. 3 cysteine pairs are disulfide-bonded: cysteine 11-cysteine 33, cysteine 32-cysteine 72, and cysteine 39-cysteine 65. The active site involves histidine 36. Ca(2+) is bound at residue aspartate 37.

It belongs to the phospholipase A2 family. Group III subfamily. Requires Ca(2+) as cofactor. Expressed by the venom gland.

It localises to the secreted. The catalysed reaction is a 1,2-diacyl-sn-glycero-3-phosphocholine + H2O = a 1-acyl-sn-glycero-3-phosphocholine + a fatty acid + H(+). In terms of biological role, PLA2 catalyzes the calcium-dependent hydrolysis of the 2-acyl groups in 3-sn-phosphoglycerides. This is Phospholipase A2 isozymes PA3A/PA3B/PA5 from Heloderma suspectum (Gila monster).